Reading from the N-terminus, the 383-residue chain is Probable cytosolic iron-sulfur protein assembly protein 1 (383 aa).

7 WD repeats span residues Ala-10–Leu-49, Thr-56–Asp-108, Gly-135–Glu-175, Asp-182–Ser-221, Gly-228–Glu-275, Val-302–Ile-341, and His-349–Ile-383.

This sequence belongs to the WD repeat CIA1 family. Interacts with NAR1.

It is found in the cytoplasm. It localises to the nucleus. Functionally, essential component of the cytosolic iron-sulfur (Fe/S) protein assembly machinery. Required for the maturation of extramitochondrial Fe/S proteins. In Candida albicans (strain SC5314 / ATCC MYA-2876) (Yeast), this protein is Probable cytosolic iron-sulfur protein assembly protein 1.